We begin with the raw amino-acid sequence, 131 residues long: MRHYEIVFMVHPDQSEQVPGMIERYSATITNAQGQIHRLEDWGRRQLAYPINKLHKAHYVLMNVEAPQEVIDELETNFRFNDAVIRSMIMRVKHAVTEASPMVKAKDERRSRDYSLEDANMDAEEAGDSEE.

A disordered region spans residues 100–131 (SPMVKAKDERRSRDYSLEDANMDAEEAGDSEE). Positions 104 to 115 (KAKDERRSRDYS) are enriched in basic and acidic residues. The span at 119 to 131 (ANMDAEEAGDSEE) shows a compositional bias: acidic residues.

It belongs to the bacterial ribosomal protein bS6 family.

Functionally, binds together with bS18 to 16S ribosomal RNA. This chain is Small ribosomal subunit protein bS6, found in Photorhabdus laumondii subsp. laumondii (strain DSM 15139 / CIP 105565 / TT01) (Photorhabdus luminescens subsp. laumondii).